Here is a 1804-residue protein sequence, read N- to C-terminus: Collagen alpha-1(XI) chain (1804 aa).

The N-terminal stretch at 1 to 34 (MEPWSRWKTKRWIWDLTISTLVLTFLFQAREVRG) is a signal peptide. The propeptide at 35 to 511 (AAPVDILKAL…SKGPTISAQE (477 aa)) is N-terminal propeptide. 2 disulfides stabilise this stretch: Cys-60-Cys-242 and Cys-181-Cys-235. The Laminin G-like domain occupies 70 to 242 (DIAYRVTEEA…DYCDHYSPDC (173 aa)). The tract at residues 229 to 417 (KAAYDYCDHY…DFTETSINGH (189 aa)) is nonhelical region. Asn-351 is a glycosylation site (N-linked (GlcNAc...) asparagine). The interval 418 to 506 (GAYGEKGQKG…YGGDGSKGPT (89 aa)) is triple-helical region (interrupted). Positions 437–506 (LVEGPPGPAG…YGGDGSKGPT (70 aa)) are disordered. Residues 440–488 (GPPGPAGPAGLMGPPGLQGPSGLPGDPGDRGPPGRPGLPGADGLPGPPG) enclose the Collagen-like 1 domain. Composition is skewed to low complexity over residues 447 to 465 (PAGL…LPGD) and 477 to 494 (LPGA…LMLP). Residues 507 to 509 (ISA) are short nonhelical segment. The interval 510-527 (QEAQAQAILQQARIALRG) is telopeptide. The segment at 526-1560 (RGPPGPMGLT…KTRRHTESIQ (1035 aa)) is disordered. Positions 528 to 1540 (PPGPMGLTGR…PGPPGPPGEV (1013 aa)) are triple-helical region. 4 consecutive Collagen-like domains span residues 530-584 (GPMG…GADG), 581-639 (GADG…EIGP), 607-664 (PGDK…PGQP), and 641-698 (GLPG…GPQG). 2 stretches are compositionally biased toward gly residues: residues 539 to 548 (GPVGGPGSAG) and 581 to 590 (GADGGRGMPG). Position 610 is an allysine (Lys-610). Over residues 639–655 (PRGLPGEAGPRGLLGPR) the composition is skewed to low complexity. A compositionally biased stretch (pro residues) spans 697 to 708 (QGLPGPQGPIGP). A compositionally biased stretch (low complexity) spans 715-726 (QGKPGLAGLPGA). One can recognise a Collagen-like 6 domain in the interval 746 to 804 (GPPGPQGPIGYPGPRGVKGADGVRGLKGSKGEKGEDGFPGFKGDMGLKGDRGEVGQVGP). Residues 805–814 (RGEDGPEGPK) show a composition bias toward basic and acidic residues. Composition is skewed to low complexity over residues 873 to 901 (KPGP…PGPK), 916 to 925 (RGPQGPQGPV), and 969 to 979 (PQGPTGETGPI). Residues 1040 to 1049 (GLKGGEGPQG) are compositionally biased toward gly residues. Positions 1074–1083 (RPGPQGPPGP) are enriched in pro residues. Low complexity predominate over residues 1084–1108 (AGEKGAPGEKGPQGPAGRDGVQGPV). The segment covering 1160 to 1169 (GIAGGDGEAG) has biased composition (gly residues). 2 stretches are compositionally biased toward pro residues: residues 1216-1227 (MGPPGPPGPRGP) and 1341-1360 (QPGP…PGKR). Low complexity-rich tracts occupy residues 1383 to 1392 (AEGPPGKTGP) and 1417 to 1426 (QGLPGAAGQD). 3 Collagen-like domains span residues 1391–1449 (GPVG…SKGE), 1442–1492 (GDPG…PGPA), and 1481–1539 (GAKG…PPGE). A compositionally biased stretch (pro residues) spans 1428–1437 (PPGPLGPPGL). The residue at position 1450 (Lys-1450) is an Allysine. Residues 1453–1462 (PGLIGLIGPP) show a composition bias toward low complexity. The span at 1481 to 1490 (GAKGDGGIPG) shows a compositional bias: gly residues. A compositionally biased stretch (pro residues) spans 1491–1507 (PAGPIGPPGPPGLPGPA). A compositionally biased stretch (low complexity) spans 1509–1519 (PKGNKGSSGPT). Residues 1528 to 1537 (PGPPGPPGPP) show a composition bias toward pro residues. Residues 1541-1561 (IQPLPILSPKKTRRHTESIQA) form a nonhelical region (C-terminal) region. Positions 1562 to 1804 (DAGDNILDYS…FEVGPACFLG (243 aa)) are cleaved as a propeptide — C-terminal propeptide. A Fibrillar collagen NC1 domain is found at 1575-1803 (EEIFGSLNSL…GFEVGPACFL (229 aa)). Cysteines 1605 and 1637 form a disulfide. 5 residues coordinate Ca(2+): Asp-1623, Asn-1625, Gln-1626, Cys-1628, and Asp-1631. N-linked (GlcNAc...) asparagine glycans are attached at residues Asn-1638 and Asn-1707. Intrachain disulfides connect Cys-1646–Cys-1801 and Cys-1712–Cys-1755.

The protein belongs to the fibrillar collagen family. As to quaternary structure, trimers composed of three different chains: alpha 1(XI), alpha 2(XI), and alpha 3(XI). Alpha 3(XI) is probably a post-translational modification of alpha 1(II). In terms of processing, prolines at the third position of the tripeptide repeating unit (G-X-Y) are hydroxylated in some or all of the chains. Post-translationally, N-glycosylated.

It is found in the secreted. The protein resides in the extracellular space. Its subcellular location is the extracellular matrix. Its function is as follows. May play an important role in fibrillogenesis by controlling lateral growth of collagen II fibrils. The polypeptide is Collagen alpha-1(XI) chain (Col11a1) (Rattus norvegicus (Rat)).